The primary structure comprises 350 residues: 3-isopropylmalate dehydrogenase (350 aa).

71-84 serves as a coordination point for NAD(+); sequence GPKWADAPRHLRPE. Substrate contacts are provided by Arg91, Arg101, Arg129, and Asp220. The Mg(2+) site is built by Asp220, Asp244, and Asp248. An NAD(+)-binding site is contributed by 279–291; the sequence is GSAPDIAGKGLAN.

Belongs to the isocitrate and isopropylmalate dehydrogenases family. LeuB type 1 subfamily. Homodimer. It depends on Mg(2+) as a cofactor. Requires Mn(2+) as cofactor.

Its subcellular location is the cytoplasm. It carries out the reaction (2R,3S)-3-isopropylmalate + NAD(+) = 4-methyl-2-oxopentanoate + CO2 + NADH. It functions in the pathway amino-acid biosynthesis; L-leucine biosynthesis; L-leucine from 3-methyl-2-oxobutanoate: step 3/4. Functionally, catalyzes the oxidation of 3-carboxy-2-hydroxy-4-methylpentanoate (3-isopropylmalate) to 3-carboxy-4-methyl-2-oxopentanoate. The product decarboxylates to 4-methyl-2 oxopentanoate. The polypeptide is 3-isopropylmalate dehydrogenase (Caulobacter vibrioides (strain ATCC 19089 / CIP 103742 / CB 15) (Caulobacter crescentus)).